The sequence spans 338 residues: Citramalyl-CoA lyase, mitochondrial (338 aa).

The N-terminal 20 residues, 1 to 20, are a transit peptide targeting the mitochondrion; that stretch reads MALCVLRNTVRGAAALPRLK. Positions 48, 55, and 59 each coordinate substrate. N6-acetyllysine occurs at positions 55, 59, and 64. N6-acetyllysine; alternate is present on residues Lys80 and Lys90. Lys80 and Lys90 each carry N6-succinyllysine; alternate. Arg105 contacts substrate. Glu169 and Asp204 together coordinate Mg(2+). 270–271 serves as a coordination point for substrate; sequence IH. Position 307 is an N6-succinyllysine (Lys307). Asp318 is a catalytic residue.

This sequence belongs to the HpcH/HpaI aldolase family. Citrate lyase beta subunit-like subfamily. As to quaternary structure, homotrimer. It depends on Mg(2+) as a cofactor. As to expression, detected in brown fat, brain, liver, kidney, heart, skeletal muscle and ovary (at protein level).

The protein localises to the mitochondrion. The catalysed reaction is glyoxylate + acetyl-CoA + H2O = (S)-malate + CoA + H(+). The enzyme catalyses propanoyl-CoA + glyoxylate + H2O = 3-methylmalate + CoA + H(+). It carries out the reaction (3S)-citramalyl-CoA = pyruvate + acetyl-CoA. It catalyses the reaction (S)-malyl-CoA + H2O = (S)-malate + CoA + H(+). Its function is as follows. Mitochondrial citramalyl-CoA lyase indirectly involved in the vitamin B12 metabolism. Converts citramalyl-CoA into acetyl-CoA and pyruvate in the C5-dicarboxylate catabolism pathway. The C5-dicarboxylate catabolism pathway is required to detoxify itaconate, a vitamin B12-poisoning metabolite. Also acts as a malate synthase in vitro, converting glyoxylate and acetyl-CoA to malate. Also displays malyl-CoA thioesterase activity. Also acts as a beta-methylmalate synthase in vitro, by mediating conversion of glyoxylate and propionyl-CoA to beta-methylmalate. Also has very weak citramalate synthase activity in vitro. In Mus musculus (Mouse), this protein is Citramalyl-CoA lyase, mitochondrial.